A 373-amino-acid chain; its full sequence is MKSGRFIGVMSGTSLDGVDVVLAAIDETMVAQQASLTWPIPVHLKKGILDICQGQPLTLSQLGQLDTQLGRLFAQAVNALLARQRLQPRDIVAIGCHGQTVWHEPTGEAPHTLQIGDNNHIVAHTGITVVGDFRRRDIALGGQGAPLVPAFHHALLGHPTEKRMVLNIGGIANLSLLFPGQAVRGYDTGPGNMLMDAWIWRQCAQPYDKDAAWAKEGQVILPLLQKMLRDPYFAASAPKSTGREYFNYGWLERHLTAFSGADARDVQATLAELTAVSIAQQVLLNGGCERLMVCGGGSRNPLVMARLAALLPGIEVSTTDKAGISGDDMEALAFAWLAWRTLAGLPGNLPSVTGATEASVLGAIYPANPITQS.

12–19 (GTSLDGVD) is a binding site for ATP.

The protein belongs to the anhydro-N-acetylmuramic acid kinase family.

It catalyses the reaction 1,6-anhydro-N-acetyl-beta-muramate + ATP + H2O = N-acetyl-D-muramate 6-phosphate + ADP + H(+). It participates in amino-sugar metabolism; 1,6-anhydro-N-acetylmuramate degradation. It functions in the pathway cell wall biogenesis; peptidoglycan recycling. In terms of biological role, catalyzes the specific phosphorylation of 1,6-anhydro-N-acetylmuramic acid (anhMurNAc) with the simultaneous cleavage of the 1,6-anhydro ring, generating MurNAc-6-P. Is required for the utilization of anhMurNAc either imported from the medium or derived from its own cell wall murein, and thus plays a role in cell wall recycling. The protein is Anhydro-N-acetylmuramic acid kinase of Salmonella gallinarum (strain 287/91 / NCTC 13346).